A 440-amino-acid chain; its full sequence is Phosphoglycerate kinase, glycosomal (440 aa).

12 residues coordinate (2R)-3-phosphoglycerate: V23, D24, F25, N26, R39, S61, H62, G64, R65, R135, H171, and R172. G217 is a CDP binding site. Position 218 (A218) interacts with ADP. Positions 218 and 219 each coordinate AMP. A218 lines the ATP pocket. A218 is a Mg(2+) binding site. K219 provides a ligand contact to (2R)-3-phosphoglycerate. Residue D222 participates in CDP binding. D222 contributes to the Mg(2+) binding site. K223 and G241 together coordinate ADP. AMP is bound at residue K223. G241 is a CDP binding site. AMP-binding residues include A242 and A314. ATP is bound by residues A242 and A314. The ADP site is built by A314 and N338. CDP-binding residues include G339 and F344. F344, E345, D377, and S378 together coordinate ADP. E345 contacts AMP. Residues D377 and S378 each contribute to the ATP site. D377 contacts Mg(2+).

Belongs to the phosphoglycerate kinase family. In terms of assembly, monomer. Requires Mg(2+) as cofactor.

It localises to the glycosome. The enzyme catalyses (2R)-3-phosphoglycerate + ATP = (2R)-3-phospho-glyceroyl phosphate + ADP. It functions in the pathway carbohydrate degradation; glycolysis; pyruvate from D-glyceraldehyde 3-phosphate: step 2/5. This Trypanosoma brucei brucei protein is Phosphoglycerate kinase, glycosomal.